A 339-amino-acid chain; its full sequence is D-erythrose-4-phosphate dehydrogenase (339 aa).

11 to 12 (RI) is an NAD(+) binding site. Substrate contacts are provided by residues 158–160 (SCT), Arg204, 217–218 (TK), and Arg240. Catalysis depends on Cys159, which acts as the Nucleophile. Asn322 is an NAD(+) binding site.

It belongs to the glyceraldehyde-3-phosphate dehydrogenase family. Epd subfamily. As to quaternary structure, homotetramer.

It localises to the cytoplasm. It catalyses the reaction D-erythrose 4-phosphate + NAD(+) + H2O = 4-phospho-D-erythronate + NADH + 2 H(+). It functions in the pathway cofactor biosynthesis; pyridoxine 5'-phosphate biosynthesis; pyridoxine 5'-phosphate from D-erythrose 4-phosphate: step 1/5. Functionally, catalyzes the NAD-dependent conversion of D-erythrose 4-phosphate to 4-phosphoerythronate. This Aliivibrio fischeri (strain MJ11) (Vibrio fischeri) protein is D-erythrose-4-phosphate dehydrogenase.